Consider the following 697-residue polypeptide: Heat shock protein homolog SSE1 (697 aa).

The segment covering 664–674 (EMAEKLAAQRA) has biased composition (low complexity). The interval 664–697 (EMAEKLAAQRAAEQKAQESKAESDKDAEGDIDLD) is disordered. Basic and acidic residues predominate over residues 675-691 (AEQKAQESKAESDKDAE).

This sequence belongs to the heat shock protein 70 family.

The protein localises to the cytoplasm. The protein is Heat shock protein homolog SSE1 (SSE1) of Eremothecium gossypii (strain ATCC 10895 / CBS 109.51 / FGSC 9923 / NRRL Y-1056) (Yeast).